Here is a 92-residue protein sequence, read N- to C-terminus: Small ribosomal subunit protein uS19 (92 aa).

This sequence belongs to the universal ribosomal protein uS19 family.

In terms of biological role, protein S19 forms a complex with S13 that binds strongly to the 16S ribosomal RNA. The sequence is that of Small ribosomal subunit protein uS19 from Wigglesworthia glossinidia brevipalpis.